A 137-amino-acid chain; its full sequence is Large ribosomal subunit protein uL16 (137 aa).

Belongs to the universal ribosomal protein uL16 family. As to quaternary structure, part of the 50S ribosomal subunit.

Functionally, binds 23S rRNA and is also seen to make contacts with the A and possibly P site tRNAs. The polypeptide is Large ribosomal subunit protein uL16 (Acinetobacter baumannii (strain SDF)).